Reading from the N-terminus, the 388-residue chain is Putative [LysW]-aminoadipate semialdehyde/glutamate semialdehyde transaminase (388 aa).

Residues G100–T101 and F127 each bind pyridoxal 5'-phosphate. A substrate-binding site is contributed by R130. D211–Q214 lines the pyridoxal 5'-phosphate pocket. K240 is modified (N6-(pyridoxal phosphate)lysine). S268 serves as a coordination point for substrate. T269 lines the pyridoxal 5'-phosphate pocket.

The protein belongs to the class-III pyridoxal-phosphate-dependent aminotransferase family. LysJ subfamily. Homodimer. Pyridoxal 5'-phosphate serves as cofactor.

The protein resides in the cytoplasm. The catalysed reaction is [amino-group carrier protein]-C-terminal-gamma-(L-lysyl)-L-glutamate + 2-oxoglutarate = [amino-group carrier protein]-C-terminal-N-(1-carboxy-5-oxopentan-1-yl)-L-glutamine + L-glutamate. The enzyme catalyses [amino-group carrier protein]-C-terminal-gamma-(L-ornithyl)-L-glutamate + 2-oxoglutarate = [amino-group carrier protein]-C-terminal-gamma-(L-glutamyl-5-semialdehyde)-L-glutamate + L-glutamate. Its pathway is amino-acid biosynthesis; L-lysine biosynthesis via AAA pathway; L-lysine from L-alpha-aminoadipate (Thermus route): step 4/5. The protein operates within amino-acid biosynthesis; L-arginine biosynthesis. Involved in both the arginine and lysine biosynthetic pathways. This Aeropyrum pernix (strain ATCC 700893 / DSM 11879 / JCM 9820 / NBRC 100138 / K1) protein is Putative [LysW]-aminoadipate semialdehyde/glutamate semialdehyde transaminase.